We begin with the raw amino-acid sequence, 333 residues long: Photosystem II assembly lipoprotein Ycf48 (333 aa).

A signal peptide spans 1 to 23 (MTRFVSSAINLLLVLVLGVSLSG). A lipid anchor (N-palmitoyl cysteine) is attached at Cys24. Residue Cys24 is the site of S-diacylglycerol cysteine attachment.

This sequence belongs to the Ycf48 family. As to quaternary structure, part of early PSII assembly complexes which includes D1 (psbA) and PsbI; not found in mature PSII. Binds to the lumenal side of PSII complexes. Interacts with YidC.

The protein resides in the cellular thylakoid membrane. Functionally, a factor required for optimal assembly of photosystem II (PSII), acting in the early stages of PSII assembly. Also plays a role in replacement of photodamaged D1 (psbA). Assists YidC in synthesis of chlorophyll-binding proteins. The protein is Photosystem II assembly lipoprotein Ycf48 of Parasynechococcus marenigrum (strain WH8102).